A 211-amino-acid chain; its full sequence is Protein GrpE (211 aa).

The segment covering 1-10 (MTDDTKKPGP) has biased composition (basic and acidic residues). Disordered regions lie at residues 1–37 (MTDD…PDPV) and 187–211 (AKGG…EKDA). Over residues 27 to 36 (EQAETAEPDP) the composition is skewed to acidic residues. Residues 201 to 211 (PGTSSLNEKDA) are compositionally biased toward polar residues.

It belongs to the GrpE family. In terms of assembly, homodimer.

It is found in the cytoplasm. Participates actively in the response to hyperosmotic and heat shock by preventing the aggregation of stress-denatured proteins, in association with DnaK and GrpE. It is the nucleotide exchange factor for DnaK and may function as a thermosensor. Unfolded proteins bind initially to DnaJ; upon interaction with the DnaJ-bound protein, DnaK hydrolyzes its bound ATP, resulting in the formation of a stable complex. GrpE releases ADP from DnaK; ATP binding to DnaK triggers the release of the substrate protein, thus completing the reaction cycle. Several rounds of ATP-dependent interactions between DnaJ, DnaK and GrpE are required for fully efficient folding. This is Protein GrpE from Agrobacterium fabrum (strain C58 / ATCC 33970) (Agrobacterium tumefaciens (strain C58)).